Reading from the N-terminus, the 417-residue chain is MRFFLLMAVIYTTLAIAPVHFDREKVFRVKLQNEKHASVLKNLTQSIELDFWYPDAIHDIAVNMTVDFRVSEKESQTIQSTLEQHKIHYEILIHDLQEEIEKQFDVKDEIAGRHSYAKYNDWDKIVSWTEKMLEKHPEMVSRIKIGSTVEDNPLYVLKIGKKDGERKAIFMDCGIHAREWISPAFCQWFVYQATKSYGKNKIMTKLLDRMNFYVLPVFNVDGYIWSWTQDRMWRKNRSRNQNSTCIGTDLNRNFDVSWDSSPNTNKPCLNVYRGPAPESEKETKAVTNFIRSHLNSIKAYITFHSYSQMLLIPYGYTFKLPPNHQDLLKVARIATDALSTRYETRYIYGPIASTIYKTSGSSLDWVYDLGIKHTFAFELRDKGKSGFLLPESRIKPTCKETMLSVKFIAKYILKNTS.

A signal peptide spans methionine 1 to alanine 15. A propeptide spans isoleucine 16 to glutamate 109 (activation peptide). One can recognise a Peptidase M14 domain in the interval lysine 118–isoleucine 412. Intrachain disulfides connect cysteine 173-cysteine 186 and cysteine 245-cysteine 268. 2 residues coordinate Zn(2+): histidine 176 and glutamate 179. Position 304 (histidine 304) interacts with Zn(2+). Glutamate 378 (proton donor/acceptor) is an active-site residue.

The protein belongs to the peptidase M14 family. It depends on Zn(2+) as a cofactor.

The protein localises to the cytoplasmic vesicle. Its subcellular location is the secretory vesicle. The enzyme catalyses Release of a C-terminal amino acid, but little or no action with -Asp, -Glu, -Arg, -Lys or -Pro.. The sequence is that of Mast cell carboxypeptidase A (Cpa3) from Mus musculus (Mouse).